We begin with the raw amino-acid sequence, 317 residues long: Carbamate kinase (317 aa).

Belongs to the carbamate kinase family. Homodimer.

The enzyme catalyses hydrogencarbonate + NH4(+) + ATP = carbamoyl phosphate + ADP + H2O + H(+). It functions in the pathway metabolic intermediate metabolism; carbamoyl phosphate degradation; CO(2) and NH(3) from carbamoyl phosphate: step 1/1. In Giardia intestinalis (Giardia lamblia), this protein is Carbamate kinase (CBK).